The chain runs to 533 residues: MFVASEAFPLAKTGGLADVCASLPKALRALGCDVRVLMPGYAQALDRVLRPRVVAELGEVLPGAAVRIIAGSMPDSGVPVWLLDCPSLYRRAGSLYCGPDDADWADNAYRFGLLCQVAARVALGAAGLRWRPDVVHAHDWHGGLVALLTRGAGDARPKTVFTIHNAAFQGNFALDDAARIGLPADALSVDGVEFYGQLSFLKAGARYADRLTTVSPTYAGEIQTAEFGCGLEGLYAARRDQLSGIMNGIDTELWNPATDRWLPQPYSIDDMGGKAGCKAALQQELGLCADARAPLVASVCRLTSQKMSDIVLERLPEQLAQHPRMQFALHGRGDRALEQGFDALAAQYPRRVAVRIGYDETLAHRIHAGADILLHGARFEPCGLTQLYAMRYGTIPIVRRVGGLADSVVDLDTLAPHSEDATGFVFDAPTGDAMSEALRRCVNLHDARPGVWSALCRLAMARDSSWSRSARAYLDLYAALTPRRRVEASDEARGAAAALARADAASGRRRRAPEQSERLRQERLARQVALASK.

K12 lines the ADP-alpha-D-glucose pocket. The disordered stretch occupies residues 497–533 (AALARADAASGRRRRAPEQSERLRQERLARQVALASK). Residues 512–525 (APEQSERLRQERLA) are compositionally biased toward basic and acidic residues.

This sequence belongs to the glycosyltransferase 1 family. Bacterial/plant glycogen synthase subfamily.

The enzyme catalyses [(1-&gt;4)-alpha-D-glucosyl](n) + ADP-alpha-D-glucose = [(1-&gt;4)-alpha-D-glucosyl](n+1) + ADP + H(+). It participates in glycan biosynthesis; glycogen biosynthesis. Synthesizes alpha-1,4-glucan chains using ADP-glucose. The chain is Glycogen synthase from Burkholderia thailandensis (strain ATCC 700388 / DSM 13276 / CCUG 48851 / CIP 106301 / E264).